The following is a 263-amino-acid chain: RNA exonuclease 4 (263 aa).

A disordered region spans residues 1 to 27 (MRLSSNWSKLQDGVTKKAGKKRIDKKP). Positions 17–27 (KAGKKRIDKKP) are enriched in basic residues. The Exonuclease domain occupies 95 to 247 (YIAMDCEFVG…EDARATMLIY (153 aa)).

Belongs to the REXO4 family.

It localises to the nucleus. In terms of biological role, exoribonuclease involved in ribosome biosynthesis. Involved in the processing of ITS1, the internal transcribed spacer localized between the 18S and 5.8S rRNAs. This Candida glabrata (strain ATCC 2001 / BCRC 20586 / JCM 3761 / NBRC 0622 / NRRL Y-65 / CBS 138) (Yeast) protein is RNA exonuclease 4 (REX4).